The sequence spans 329 residues: Mo25-like protein (329 aa).

Belongs to the Mo25 family.

In Schizosaccharomyces pombe (strain 972 / ATCC 24843) (Fission yeast), this protein is Mo25-like protein (pmo25).